The following is a 103-amino-acid chain: BLOC-1-related complex subunit 7 (103 aa).

The protein belongs to the BORCS7 family.

The protein localises to the lysosome membrane. In terms of biological role, as part of a BORC-like complex may play a role in lysosomes movement and localization at the cell periphery. Associated with the cytosolic face of lysosomes, this complex may couple lysosomes to microtubule plus-end-directed kinesin motor. This Danio rerio (Zebrafish) protein is BLOC-1-related complex subunit 7.